We begin with the raw amino-acid sequence, 513 residues long: MTDKNPIVVMKGITIEFPGVKALDGVDLTLYPGEVHALMGENGAGKSTMIKALTGVYKINAGSIMVDGKPQQFNGTLDAQNAGIATVYQEVNLCTNLSVGENVMLGHEKRGPFGIDWKKTHEAAKKYLAQMGLESIDPHTPLSSISIAMQQLVAIARAMVINAKVLILDEPTSSLDANEVRDLFAIMRKVRDSGVAILFVSHFLDQIYEITDRLTILRNGQFIKEVMTKDTPRDELIGMMIGKSAAELSQIGAKKARREITPGEKPIVDVKGLGKKGTINPVDVDIYKGEVVGFAGLLGSGRTELGRLLYGADKPDSGTYTLNGKKVNISDPYTALKNKIAYSTENRRDEGIIGDLTVRQNILIALQATRGMFKPIPKKEADAIVDKYMKELNVRPADPDRPVKNLSGGNQQKVLIGRWLATHPELLILDEPTRGIDIGAKAEIQQVVLDLASQGMGVVFISSELEEVVRLSDDIEVLKDRHKIAEIENDDTVSQATIVETIANTNVNTGKEA.

2 ABC transporter domains span residues 8-244 (VVMK…IGKS) and 262-505 (PGEK…IANT). 40–47 (GENGAGKS) is an ATP binding site.

The protein belongs to the ABC transporter superfamily. The complex is composed of an ATP-binding protein (FruK), two transmembrane proteins (FruF and FruG) and a solute-binding protein (FruE).

Its subcellular location is the cell membrane. The enzyme catalyses D-fructose(out) + ATP + H2O = D-fructose(in) + ADP + phosphate + H(+). Its function is as follows. Part of the high-affinity ABC transporter complex FruEKFG involved in fructose uptake. Can also transport ribose and xylose, with lower affinity. Probably responsible for energy coupling to the transport system. The chain is Fructose import ATP-binding protein FruK from Bifidobacterium longum (strain NCC 2705).